The primary structure comprises 602 residues: Alpha-glucosides permease MPH3 (602 aa).

Residues 1 to 106 (MKNLSFLINR…AAAWSLLVST (106 aa)) are Cytoplasmic-facing. Residues 107 to 127 (TLIMEGYDTAILGAFYALPIF) form a helical membrane-spanning segment. Over 128-142 (QRKFGSQNDKTGEWE) the chain is Extracellular. Residues 143-163 (ISASWQIGLTLCYMAGEIVGL) traverse the membrane as a helical segment. The Cytoplasmic segment spans residues 164 to 178 (QLTGPSVDLVGNRYT). The helical transmembrane segment at 179 to 199 (LIIALFFLAAFTFILYFCNSL) threads the bilayer. A topological domain (extracellular) is located at residue glycine 200. The helical transmembrane segment at 201 to 221 (MIAVGQALCGMPWGCFQCLTV) threads the bilayer. At 222–234 (SYASEICPLALRY) the chain is on the cytoplasmic side. Residues 235-255 (YLTTYSNLCWLFGQLFAAGIM) form a helical membrane-spanning segment. At 256–270 (KNSQKKYADSELGYK) the chain is on the extracellular side. The chain crosses the membrane as a helical span at residues 271-291 (LPFALQWILPVPLALGIFFAP). At 292–363 (ESPWWLVKKG…EDKINRRRTR (72 aa)) the chain is on the cytoplasmic side. Residues 364-384 (ITCLCWAGQATCGSILIGYST) traverse the membrane as a helical segment. The Extracellular portion of the chain corresponds to 385–397 (YFYEKAGVSTEMS). The chain crosses the membrane as a helical span at residues 398–418 (FTFSIIQYCLGICATFLSWWA). At 419-426 (SKYFGRYD) the chain is on the cytoplasmic side. Residues 427 to 447 (LYAFGLAFQTIVFFIIGGLGC) traverse the membrane as a helical segment. Over 448–459 (SSTHGSKMGSGS) the chain is Extracellular. Residues 460–480 (LLMAVAFFYNLGIAPVVFCLV) traverse the membrane as a helical segment. Residues 481-492 (SEMPSSRLRTKT) are Cytoplasmic-facing. The helical transmembrane segment at 493–513 (IILARNTYNVVSIICSVLILY) threads the bilayer. The Extracellular segment spans residues 514 to 525 (QLNSKKWNWGAK). A helical transmembrane segment spans residues 526 to 546 (SGFFWGVLCFCTLIWAVVDLP). The Cytoplasmic portion of the chain corresponds to 547–602 (ETAGKTFVEINELFKLGVSARKFKSTKVDPFVVKTPPKDVSHNDPKGDIEASIAEE). The segment covering 582–595 (PPKDVSHNDPKGDI) has biased composition (basic and acidic residues). A disordered region spans residues 582-602 (PPKDVSHNDPKGDIEASIAEE).

The protein belongs to the major facilitator superfamily. Sugar transporter (TC 2.A.1.1) family.

Its subcellular location is the cell membrane. In terms of biological role, high-affinity uptake of maltose and maltotriose. Also transports alpha-methylglucoside, glucose and turanose but not melezitose or trehalose. The polypeptide is Alpha-glucosides permease MPH3 (MPH3) (Saccharomyces cerevisiae (strain ATCC 204508 / S288c) (Baker's yeast)).